Consider the following 419-residue polypeptide: Transcription termination factor Rho (419 aa).

Positions 48–123 constitute a Rho RNA-BD domain; the sequence is EISGDGVLEI…LKVDTINFDR (76 aa). RNA-binding regions lie at residues 61–66, 78–80, and 108–110; these read GFGFLR, DIY, and ERY. ATP-binding positions include 169–174, 181–186, and Arg-212; these read GKGQRG and KAGKTI. The interval 284-288 is RNA-binding 2; it reads VLTGG.

Belongs to the Rho family. Homohexamer. The homohexamer assembles into an open ring structure.

Its function is as follows. Facilitates transcription termination by a mechanism that involves Rho binding to the nascent RNA, activation of Rho's RNA-dependent ATPase activity, and release of the mRNA from the DNA template. The sequence is that of Transcription termination factor Rho from Pseudomonas fluorescens biotype C.